A 646-amino-acid chain; its full sequence is MSSNSWADVSESERAPSGGGWGYSRPSRTNYVPPHLRSRTPSSEFVAPSPGNNDRGGYGGANSGYGGRGQGYGGRGSGYGGRGGPVGGWNARSGGWDRRDTETNPFGNDGNADPAVNEQENTVINFEAYEDIPIETSGDNVPPPVNTFAEIDLGEALNLNIQRCKYVKPTPVQRNAIPILAAGRDLMACAQTGSGKTAAFCFPIISGIMKDQHIERPRGVRGVYPLAVILSPTRELACQIHDEARKFSYQTGVKVVVAYGGTPVNQQIRELERGVDILVATPGRLNDLLERGRVSLQMVRFLALDEADRMLDMGFEPQIRKIVQQMDMPPPGVRQTMLFSATFPREIQRLASDFLSNYIFLAVGRVGSSTDLIVQRVEFVHDSDKRSHLMDLLHAQRENGNQGKQALTLVFVETKKGADSLENWLCINGFPATTIHGDRSQQEREVALRSFKTGRTPILVATDVAARGLDIPHVAHVVNFDLPNDIDDYVHRIGRTGRAGNSGLATAFFNDNNTTMAKPLAELMQEANQEVPDWLTRYASRASFGGGKNRRSGGRFGGRDFRRESFSRGGGGADYYGGGGGYGGVPGGGYGAMPGGYGPVPGGGYGNVPGGGYAPYGRGGGAYYGPGGYGTVPNQGYGPGVASAWD.

Disordered regions lie at residues 1-64 (MSSN…ANSG) and 76-117 (GSGY…PAVN). At Ser-2 the chain carries N-acetylserine. Gly residues-rich tracts occupy residues 54 to 64 (DRGGYGGANSG) and 76 to 87 (GSGYGGRGGPVG). A Q motif motif is present at residues 146 to 174 (NTFAEIDLGEALNLNIQRCKYVKPTPVQR). Residues 177 to 361 (IPILAAGRDL…SDFLSNYIFL (185 aa)) form the Helicase ATP-binding domain. 190–197 (AQTGSGKT) provides a ligand contact to ATP. Positions 305–308 (DEAD) match the DEAD box motif. A Helicase C-terminal domain is found at 388–539 (HLMDLLHAQR…EVPDWLTRYA (152 aa)).

This sequence belongs to the DEAD box helicase family. DDX3/DED1 subfamily.

It carries out the reaction ATP + H2O = ADP + phosphate + H(+). In Arabidopsis thaliana (Mouse-ear cress), this protein is DEAD-box ATP-dependent RNA helicase 52 (RH52).